A 485-amino-acid polypeptide reads, in one-letter code: GTPase Der (485 aa).

EngA-type G domains follow at residues 3 to 167 (PTIA…PEPE) and 176 to 349 (PVFA…NAAM). Residues 9 to 16 (GRPNVGKS), 56 to 60 (DTGGF), 119 to 122 (NKGE), 182 to 189 (GRPNVGKS), 229 to 233 (DTAGV), and 294 to 297 (NKWD) contribute to the GTP site. In terms of domain architecture, KH-like spans 350–434 (IKMPTPKITR…PLRIQYNVSE (85 aa)). The disordered stretch occupies residues 435–485 (NPYENAEDKPKKKPLRRVSLSNRIEKREGRKEEKNRFKKKTKVSVKKQFSK). Basic and acidic residues predominate over residues 457 to 469 (RIEKREGRKEEKN). Over residues 470–485 (RFKKKTKVSVKKQFSK) the composition is skewed to basic residues.

This sequence belongs to the TRAFAC class TrmE-Era-EngA-EngB-Septin-like GTPase superfamily. EngA (Der) GTPase family. Associates with the 50S ribosomal subunit.

GTPase that plays an essential role in the late steps of ribosome biogenesis. The polypeptide is GTPase Der (Neisseria gonorrhoeae (strain NCCP11945)).